We begin with the raw amino-acid sequence, 493 residues long: 3-ketoacyl-CoA synthase 16 (493 aa).

The signal sequence occupies residues 1 to 35 (MDYPMKKVKIFFNYLMAHRFKLCFLPLMVAIAVEA). Residues 52–74 (NNHTSLTMFFLYLALGSTLYLMT) form a helical membrane-spanning segment. The region spanning 71–366 (YLMTRPKPVY…FFVRFVKKKF (296 aa)) is the FAE domain. Catalysis depends on residues Cys221, His300, His384, His388, His417, and Asn421.

The protein belongs to the thiolase-like superfamily. Chalcone/stilbene synthases family. Expressed in siliques.

The protein localises to the membrane. It carries out the reaction a very-long-chain acyl-CoA + malonyl-CoA + H(+) = a very-long-chain 3-oxoacyl-CoA + CO2 + CoA. It participates in lipid metabolism; fatty acid biosynthesis. This chain is 3-ketoacyl-CoA synthase 16, found in Arabidopsis thaliana (Mouse-ear cress).